A 202-amino-acid chain; its full sequence is Superoxide dismutase [Mn] (202 aa).

Mn(2+) contacts are provided by His27, His82, Asp164, and His168.

Belongs to the iron/manganese superoxide dismutase family. Homodimer. The cofactor is Mn(2+).

It carries out the reaction 2 superoxide + 2 H(+) = H2O2 + O2. Its function is as follows. Destroys superoxide anion radicals which are normally produced within the cells and which are toxic to biological systems. The protein is Superoxide dismutase [Mn] (sodA) of Listeria innocua serovar 6a (strain ATCC BAA-680 / CLIP 11262).